Here is a 653-residue protein sequence, read N- to C-terminus: 1-deoxy-D-xylulose-5-phosphate synthase (653 aa).

Thiamine diphosphate contacts are provided by residues H86 and 127 to 129 (GHS). Mg(2+) is bound at residue D158. Residues 159–160 (GA), N187, and F294 contribute to the thiamine diphosphate site. A Mg(2+)-binding site is contributed by N187. A compositionally biased stretch (basic and acidic residues) spans 309 to 324 (KLEKTTSEPPPKKEPR). Residues 309–343 (KLEKTTSEPPPKKEPRSPNAATAEPEAQPKPQPKP) are disordered. E395 lines the thiamine diphosphate pocket.

The protein belongs to the transketolase family. DXPS subfamily. Homodimer. Requires Mg(2+) as cofactor. It depends on thiamine diphosphate as a cofactor.

It carries out the reaction D-glyceraldehyde 3-phosphate + pyruvate + H(+) = 1-deoxy-D-xylulose 5-phosphate + CO2. Its pathway is metabolic intermediate biosynthesis; 1-deoxy-D-xylulose 5-phosphate biosynthesis; 1-deoxy-D-xylulose 5-phosphate from D-glyceraldehyde 3-phosphate and pyruvate: step 1/1. Its function is as follows. Catalyzes the acyloin condensation reaction between C atoms 2 and 3 of pyruvate and glyceraldehyde 3-phosphate to yield 1-deoxy-D-xylulose-5-phosphate (DXP). This chain is 1-deoxy-D-xylulose-5-phosphate synthase, found in Chromohalobacter salexigens (strain ATCC BAA-138 / DSM 3043 / CIP 106854 / NCIMB 13768 / 1H11).